Consider the following 593-residue polypeptide: DNA mismatch repair protein MutL (593 aa).

It belongs to the DNA mismatch repair MutL/HexB family.

In terms of biological role, this protein is involved in the repair of mismatches in DNA. It is required for dam-dependent methyl-directed DNA mismatch repair. May act as a 'molecular matchmaker', a protein that promotes the formation of a stable complex between two or more DNA-binding proteins in an ATP-dependent manner without itself being part of a final effector complex. This is DNA mismatch repair protein MutL from Leptospira interrogans serogroup Icterohaemorrhagiae serovar copenhageni (strain Fiocruz L1-130).